The sequence spans 429 residues: Bifunctional protein GlmU (429 aa).

Residues 1-223 (MKTSILILAA…EDEFMGINDK (223 aa)) form a pyrophosphorylase region. UDP-N-acetyl-alpha-D-glucosamine-binding positions include 8 to 11 (LAAG), Lys22, and 81 to 82 (GT). Asp102 contacts Mg(2+). UDP-N-acetyl-alpha-D-glucosamine-binding residues include Gly135, Glu149, Asn164, and Asn221. Asn221 serves as a coordination point for Mg(2+). Residues 224–244 (FELSIAENFMQEKIKKYWMQQ) form a linker region. Positions 245–429 (GVIFHLPQST…KDYYYKKFQK (185 aa)) are N-acetyltransferase. Residues Arg308 and Lys325 each contribute to the UDP-N-acetyl-alpha-D-glucosamine site. The active-site Proton acceptor is the His336. Tyr339 and Asn350 together coordinate UDP-N-acetyl-alpha-D-glucosamine. Acetyl-CoA-binding positions include 359–360 (NY), Ser378, Ala396, and Arg413.

It in the N-terminal section; belongs to the N-acetylglucosamine-1-phosphate uridyltransferase family. The protein in the C-terminal section; belongs to the transferase hexapeptide repeat family. In terms of assembly, homotrimer. Mg(2+) serves as cofactor.

It localises to the cytoplasm. The catalysed reaction is alpha-D-glucosamine 1-phosphate + acetyl-CoA = N-acetyl-alpha-D-glucosamine 1-phosphate + CoA + H(+). It carries out the reaction N-acetyl-alpha-D-glucosamine 1-phosphate + UTP + H(+) = UDP-N-acetyl-alpha-D-glucosamine + diphosphate. Its pathway is nucleotide-sugar biosynthesis; UDP-N-acetyl-alpha-D-glucosamine biosynthesis; N-acetyl-alpha-D-glucosamine 1-phosphate from alpha-D-glucosamine 6-phosphate (route II): step 2/2. It participates in nucleotide-sugar biosynthesis; UDP-N-acetyl-alpha-D-glucosamine biosynthesis; UDP-N-acetyl-alpha-D-glucosamine from N-acetyl-alpha-D-glucosamine 1-phosphate: step 1/1. The protein operates within bacterial outer membrane biogenesis; LPS lipid A biosynthesis. Catalyzes the last two sequential reactions in the de novo biosynthetic pathway for UDP-N-acetylglucosamine (UDP-GlcNAc). The C-terminal domain catalyzes the transfer of acetyl group from acetyl coenzyme A to glucosamine-1-phosphate (GlcN-1-P) to produce N-acetylglucosamine-1-phosphate (GlcNAc-1-P), which is converted into UDP-GlcNAc by the transfer of uridine 5-monophosphate (from uridine 5-triphosphate), a reaction catalyzed by the N-terminal domain. The polypeptide is Bifunctional protein GlmU (Campylobacter jejuni subsp. jejuni serotype O:6 (strain 81116 / NCTC 11828)).